Reading from the N-terminus, the 152-residue chain is Transcription factor ATOH7 (152 aa).

A bHLH domain is found at 40 to 92 (RRRLAANARERRRMQGLNTAFDRLRRVVPQWGQDKKLSKYETLQMALSYIMAL).

As to quaternary structure, forms a heterodimer with TCF3 isoform E47; interaction may be required for DNA-binding in certain situations.

Its subcellular location is the nucleus. It is found in the perikaryon. The protein resides in the cell projection. It localises to the axon. In terms of biological role, transcription factor that binds to DNA at the consensus sequence 5'-CAG[GC]TG-3'. Dimerization with TCF3 isoform E47 may be required in certain situations. Binds to gene promoters and enhancer elements, and thereby regulates a transcriptional program of retinal ganglion cell (RGC) determinant genes. Although the exact mechanism is not certain, retinal transcription regulation by ATOH7 has a role in RGC determination and survival, photoreceptor population development, targeting of RGC axons to the optic nerve and development of the retino-hypothalamic tract. Binds to its own promoter and enhancer sequences, suggesting autoregulation of ATOH7 transcription. Required for retinal circadian rhythm photoentrainment. Plays a role in brainstem auditory signaling and binaural processing. The polypeptide is Transcription factor ATOH7 (Homo sapiens (Human)).